The primary structure comprises 432 residues: MTLTLNRQLLTSRQILVAFSGGLDSTVLLHQLVQWRTENPGVTLRAIHVHHGLSANADAWVTHCENVCQQWQVPLVVERVQLAQEGLGIEAQARQARYQAFARTLLPGEVLVTAQHLDDQCETFLLALKRGSGPAGLSAMAEVSEFAGTRLIRPLLARTRGELEQWALAHGLRWIEDESNQDDSYDRNFLRLRVVPLLQQRWPHFAEATARSATLCAEQESLLDELLADDLAHCQTSQGTLQIAPMLAMSDARRAAIIRRWLAGQNAPMPSRDALVRIWQEVALAREDASPCLRLGAFEIRRYQSQLWWIKSITGQSETIVLWQTWLQPLELPAGLGTVQLTAGGDIRPPRADEAVSVRFKAPGLLHIVGRNGGRKLKKIWQELGVPPWLRDTTPLLFYGETLIAAAGVFVTQEGVAEGENGVSFVWQKTLS.

ATP is bound at residue 20–25; it reads SGGLDS.

The protein belongs to the tRNA(Ile)-lysidine synthase family.

It localises to the cytoplasm. The catalysed reaction is cytidine(34) in tRNA(Ile2) + L-lysine + ATP = lysidine(34) in tRNA(Ile2) + AMP + diphosphate + H(+). In terms of biological role, ligates lysine onto the cytidine present at position 34 of the AUA codon-specific tRNA(Ile) that contains the anticodon CAU, in an ATP-dependent manner. Cytidine is converted to lysidine, thus changing the amino acid specificity of the tRNA from methionine to isoleucine. The protein is tRNA(Ile)-lysidine synthase of Shigella flexneri.